A 200-amino-acid chain; its full sequence is MVNYPHKLTSKNNIKKVKKETVDFANRGMTFEKMINDTNDYYLSRGLAVIHKKPTPVQIVKVDYPKRSRAKIVEAYFRQASTTDYSGVYRGHYIDFEAKETRQKQSMPMKNFHAHQIEHMNQVLNQGGICFVLLHFSSLKETYLLPAPYLIEFYKIDKGGKSMPLDYIQKHGYLIEQNILPSVPYLDIISKNLLGGHSNE.

4 residues coordinate Mg(2+): T82, D84, E97, and Q116.

Belongs to the RecU family. Requires Mg(2+) as cofactor.

The protein localises to the cytoplasm. The catalysed reaction is Endonucleolytic cleavage at a junction such as a reciprocal single-stranded crossover between two homologous DNA duplexes (Holliday junction).. Endonuclease that resolves Holliday junction intermediates in genetic recombination. Cleaves mobile four-strand junctions by introducing symmetrical nicks in paired strands. Promotes annealing of linear ssDNA with homologous dsDNA. Required for DNA repair, homologous recombination and chromosome segregation. This is Holliday junction resolvase RecU from Streptococcus gordonii (strain Challis / ATCC 35105 / BCRC 15272 / CH1 / DL1 / V288).